A 290-amino-acid polypeptide reads, in one-letter code: 4-hydroxybenzoate octaprenyltransferase (290 aa).

6 helical membrane-spanning segments follow: residues W41 to M61, W89 to L109, F133 to F153, D158 to Y178, F202 to I224, and W269 to G289.

It belongs to the UbiA prenyltransferase family. It depends on Mg(2+) as a cofactor.

The protein localises to the cell inner membrane. The enzyme catalyses all-trans-octaprenyl diphosphate + 4-hydroxybenzoate = 4-hydroxy-3-(all-trans-octaprenyl)benzoate + diphosphate. It participates in cofactor biosynthesis; ubiquinone biosynthesis. Catalyzes the prenylation of para-hydroxybenzoate (PHB) with an all-trans polyprenyl group. Mediates the second step in the final reaction sequence of ubiquinone-8 (UQ-8) biosynthesis, which is the condensation of the polyisoprenoid side chain with PHB, generating the first membrane-bound Q intermediate 3-octaprenyl-4-hydroxybenzoate. The polypeptide is 4-hydroxybenzoate octaprenyltransferase (Burkholderia ambifaria (strain MC40-6)).